The chain runs to 56 residues: UPF0391 membrane protein PSHAa0537 (56 aa).

The next 2 helical transmembrane spans lie at 6–26 (ITFL…IAGA) and 27–47 (AAGI…ISLV).

Belongs to the UPF0391 family.

The protein localises to the cell membrane. This Pseudoalteromonas translucida (strain TAC 125) protein is UPF0391 membrane protein PSHAa0537.